The sequence spans 122 residues: NADH-quinone oxidoreductase subunit A (122 aa).

3 helical membrane passes run 10 to 30 (MIVG…LTLG), 66 to 86 (IFAL…PWAV), and 91 to 111 (LGLF…IGLA).

It belongs to the complex I subunit 3 family. In terms of assembly, NDH-1 is composed of 14 different subunits. Subunits NuoA, H, J, K, L, M, N constitute the membrane sector of the complex.

It is found in the cell membrane. The enzyme catalyses a quinone + NADH + 5 H(+)(in) = a quinol + NAD(+) + 4 H(+)(out). Functionally, NDH-1 shuttles electrons from NADH, via FMN and iron-sulfur (Fe-S) centers, to quinones in the respiratory chain. The immediate electron acceptor for the enzyme in this species is believed to be a menaquinone. Couples the redox reaction to proton translocation (for every two electrons transferred, four hydrogen ions are translocated across the cytoplasmic membrane), and thus conserves the redox energy in a proton gradient. This chain is NADH-quinone oxidoreductase subunit A, found in Bacillus cytotoxicus (strain DSM 22905 / CIP 110041 / 391-98 / NVH 391-98).